The sequence spans 85 residues: U4-theraphotoxin-Hhn1e (85 aa).

The first 22 residues, 1-22 (MKVTLIAILTCAAVLVLHTTAA), serve as a signal peptide directing secretion. Positions 23 to 48 (EELEAESQLMEVGMPDTELAAVDEER) are excised as a propeptide. Cystine bridges form between Cys52/Cys66, Cys56/Cys77, and Cys71/Cys82.

It belongs to the neurotoxin 12 (Hwtx-2) family. 02 (Hwtx-2) subfamily. As to expression, expressed by the venom gland.

It is found in the secreted. Functionally, postsynaptic neurotoxin. The protein is U4-theraphotoxin-Hhn1e of Cyriopagopus hainanus (Chinese bird spider).